Reading from the N-terminus, the 243-residue chain is Beta-glucanase (243 aa).

The first 27 residues, 1–27 (MSYRVKRMLMLLVTGLFLSLSTFAASA), serve as a signal peptide directing secretion. The region spanning 29 to 243 (AQTGGSFYEP…SLHWVRYTKR (215 aa)) is the GH16 domain. A disulfide bond links C61 and C90. E134 (nucleophile) is an active-site residue. E138 functions as the Proton donor in the catalytic mechanism.

The protein belongs to the glycosyl hydrolase 16 family.

It carries out the reaction Hydrolysis of (1-&gt;4)-beta-D-glucosidic linkages in beta-D-glucans containing (1-&gt;3)- and (1-&gt;4)-bonds.. This chain is Beta-glucanase (bg1), found in Bacillus licheniformis.